A 47-amino-acid polypeptide reads, in one-letter code: Large ribosomal subunit protein eL40 (47 aa).

It belongs to the eukaryotic ribosomal protein eL40 family.

This is Large ribosomal subunit protein eL40 from Methanococcus maripaludis (strain C5 / ATCC BAA-1333).